Consider the following 541-residue polypeptide: MVIIMDEKAKLMRCIIERILDEYNKGKTLDKKRIEQIKAECLRIHRIGIGHPSNSEILQYATEEEKKILIPILRKKPVRTISGVAVVAVMTSPEKCPHGKCIFCPGGVGSVFGDVPQSYTGREPATMRGLMFNFDPYLQTKARIEQLEKVGHPTNKIELIIMGGTFPARDIEYQDWFIKRCLDAMNGVDASSLEEAQKINETAEHRCVALCIETRPDYCGEKEINQMLKLGATRVELGVQTIYNEILEFCKRGHTVEDTIKATQLLKDSGLKVSYHLMPGMPGSDMEMDKKMFKEIFENPDFKPDMVKIYPCLVIEGTELYEMWKRGEYKPYREEEAIEIISYAKSIMPKWVRTSRIQRDIPATVIVDGVKKSNLGELVYKYMEKHGIKCKCIRCREVGHVMYKKGIMPDIEHIKLCREEYEASGGTEIFLSYEDVKNDILIAFLRLREPYKPFRKEIDDNTMLVRQLHVCGQEKPLTKDLKEITWQHKGYGRKLLEEAERIAKEEFGKKKILVTSGIGVREYYRKLGYERVGAYMGKYLE.

Residues 76–336 (KPVRTISGVA…GEYKPYREEE (261 aa)) are radical S-adenosyl-L-methionine (rSAM). In terms of domain architecture, Radical SAM core spans 79–350 (RTISGVAVVA…ISYAKSIMPK (272 aa)). [4Fe-4S] cluster is bound by residues cysteine 96, cysteine 101, and cysteine 104. Residues lysine 156, 467–470 (QLHV), 491–493 (YGR), and tyrosine 524 each bind acetyl-CoA. An N-acetyltransferase domain is found at 401–541 (VMYKKGIMPD…VGAYMGKYLE (141 aa)).

The protein belongs to the ELP3 family. [4Fe-4S] cluster serves as cofactor.

It catalyses the reaction uridine(34) in tRNA + acetyl-CoA + S-adenosyl-L-methionine + H2O = 5-(carboxymethyl)uridine(34) in tRNA + 5'-deoxyadenosine + L-methionine + CoA + 2 H(+). It functions in the pathway tRNA modification. Its function is as follows. tRNA uridine(34) acetyltransferase, which mediates formation of carboxymethyluridine in the wobble base at position 34 in tRNAs. The proposed mechanism is the following: (i) recruits S-adenosyl-L-methionine and cleaves it to generate a 5'-deoxyadenosine radical (5'-dA) in the radical S-adenosyl-L-methionine (rSAM) region, (ii) hydrolyzes acetyl-CoA in the N-acetyltransferase domain and (iii) an acetyl radical is formed by the products of the two domains and (iv) is transferred onto the C5 position of uridine(34) in the bound tRNA molecule. Does not show protein lysine acetyltransferase activity. The protein is tRNA uridine(34) acetyltransferase of Methanocaldococcus jannaschii (strain ATCC 43067 / DSM 2661 / JAL-1 / JCM 10045 / NBRC 100440) (Methanococcus jannaschii).